A 143-amino-acid chain; its full sequence is uncharacterized protein (143 aa).

Residues 4 to 24 form a helical membrane-spanning segment; sequence FGIVALSIICSIAFLFVAYGV. Positions 97–143 are disordered; the sequence is TVPFVNTEAPPPRLSSSFSRQSGENAETQSQVSASPFNDKNSPYVQE. Over residues 110–143 the composition is skewed to polar residues; sequence LSSSFSRQSGENAETQSQVSASPFNDKNSPYVQE.

The protein localises to the golgi apparatus membrane. This is an uncharacterized protein from Schizosaccharomyces pombe (strain 972 / ATCC 24843) (Fission yeast).